The following is a 222-amino-acid chain: Millepora cytotoxin-1 (222 aa).

The first 20 residues, 1-20 (MVTLYLHVPILLLVVITARA), serve as a signal peptide directing secretion. Residues 21–75 (APKPDTHNPFDELSSVAEKQDLHYGDRSRKDPFIAQNDVGNNFRDGTQENLTKVR) constitute a propeptide that is removed on maturation. Disulfide bonds link C89–C115, C142–C168, and C179–C222. Repeats lie at residues 100-109 (SIHDNHYEDR), 153-162 (SIHDNYYEDR), and 206-215 (SQHNNYYEDR).

The protein belongs to the dermatopontin family. In terms of processing, is not glycosylated.

The protein localises to the secreted. It is found in the nematocyst. In terms of biological role, is potently cytotoxic (EC(50) value 79 ng/mL) towards L1210 mouse leukemia cells, has hemagglutination activity on sheep erythrocytes, and is lethal in crayfish. Has no phospholipase A2 activity. The chain is Millepora cytotoxin-1 from Millepora dichotoma (Net fire coral).